Reading from the N-terminus, the 120-residue chain is Large ribosomal subunit protein uL24 (120 aa).

The protein belongs to the universal ribosomal protein uL24 family. Part of the 50S ribosomal subunit.

In terms of biological role, one of two assembly initiator proteins, it binds directly to the 5'-end of the 23S rRNA, where it nucleates assembly of the 50S subunit. Its function is as follows. One of the proteins that surrounds the polypeptide exit tunnel on the outside of the subunit. The chain is Large ribosomal subunit protein uL24 from Pseudarthrobacter chlorophenolicus (strain ATCC 700700 / DSM 12829 / CIP 107037 / JCM 12360 / KCTC 9906 / NCIMB 13794 / A6) (Arthrobacter chlorophenolicus).